The following is a 127-amino-acid chain: Gamma-synuclein (127 aa).

2 tandem repeats follow at residues 20-30 (EKTKQGVTEAA) and 31-41 (EKTKEGVMYVG). The tract at residues 20–67 (EKTKQGVTEAAEKTKEGVMYVGTKTKENVVHSVTSVAEKTKEQANAVS) is 4 X 11 AA tandem repeats of [EGSA]-K-T-K-[EQ]-[GQ]-V-X(4). The 3; approximate repeat unit spans residues 42–56 (TKTKENVVHSVTSVA). The stretch at 57–67 (EKTKEQANAVS) is repeat 4. Residues serine 67 and serine 72 each carry the phosphoserine modification. The interval 97 to 127 (KEDLKPSAPQQEGEAAKEKEEVAEEAQSGGD) is disordered. Serine 124 carries the phosphoserine; by BARK1, CaMK2 and CK2 modification.

Belongs to the synuclein family. May be a centrosome-associated protein. Interacts with MYOC; affects its secretion and its aggregation. Post-translationally, phosphorylated. Phosphorylation by GRK5 appears to occur on residues distinct from the residue phosphorylated by other kinases.

It localises to the cytoplasm. The protein localises to the perinuclear region. The protein resides in the cytoskeleton. Its subcellular location is the microtubule organizing center. It is found in the centrosome. It localises to the spindle. Functionally, plays a role in neurofilament network integrity. May be involved in modulating axonal architecture during development and in the adult. In vitro, increases the susceptibility of neurofilament-H to calcium-dependent proteases. May also function in modulating the keratin network in skin. Activates the MAPK and Elk-1 signal transduction pathway. The sequence is that of Gamma-synuclein (SNCG) from Macaca fascicularis (Crab-eating macaque).